The chain runs to 471 residues: MASCVGSRTLSKDDVNYRMHFRMINEQQVEDITIDFFYRPHTITLLSFTIVSLMYFAFTRDDSVPEDNIWRGILSVIFFFLIISVLAFPNGPFTRPHPALWRMVFGLSVLYFLFLVFLLFLNFEQVKSLMYWLDPNLRYATREADIMEYAVNCHVITWERIVSHFDIFAFGHFWGWAMKALLIRSYGLCWTISITWELTELFFMHLLPNFAECWWDQVILDILLCNGGGIWLGMVVCRFLEMRTYHWASFKDIHTTTGKIKRAVLQFTPASWTYVRWFDPKSSFQRVAGVYLFMIIWQLTELNTFFLKHIFVFQASHPLSWCRILFIGCITAPTVRQYYAYLTDTQCKRVGTQCWVFGVIGFLEAIVCIKFGQDLFSKTQILYVVFWLLCVAFTTFLCLYGMVWYAEHYGHREKTYSECEDGTPEISWHHGKGSKGSEDSPPKHSSNNESHSSRRRNRHSKSKVTNGVGKK.

A2 bears the N-acetylalanine mark. At 2-35 the chain is on the cytoplasmic side; sequence ASCVGSRTLSKDDVNYRMHFRMINEQQVEDITID. The chain crosses the membrane as a helical span at residues 36–56; that stretch reads FFYRPHTITLLSFTIVSLMYF. The Lumenal portion of the chain corresponds to 57-72; it reads AFTRDDSVPEDNIWRG. A helical membrane pass occupies residues 73-93; it reads ILSVIFFFLIISVLAFPNGPF. Over 94 to 102 the chain is Cytoplasmic; the sequence is TRPHPALWR. The helical transmembrane segment at 103–123 threads the bilayer; that stretch reads MVFGLSVLYFLFLVFLLFLNF. At 124 to 160 the chain is on the lumenal side; sequence EQVKSLMYWLDPNLRYATREADIMEYAVNCHVITWER. The helical transmembrane segment at 161 to 181 threads the bilayer; that stretch reads IVSHFDIFAFGHFWGWAMKAL. At 182 to 186 the chain is on the cytoplasmic side; the sequence is LIRSY. The helical transmembrane segment at 187–207 threads the bilayer; the sequence is GLCWTISITWELTELFFMHLL. Topologically, residues 208–216 are lumenal; that stretch reads PNFAECWWD. Residues 217-237 traverse the membrane as a helical segment; sequence QVILDILLCNGGGIWLGMVVC. The Cytoplasmic portion of the chain corresponds to 238–286; sequence RFLEMRTYHWASFKDIHTTTGKIKRAVLQFTPASWTYVRWFDPKSSFQR. A helical transmembrane segment spans residues 287-307; sequence VAGVYLFMIIWQLTELNTFFL. Residues 308–309 lie on the Lumenal side of the membrane; the sequence is KH. The chain crosses the membrane as a helical span at residues 310-330; sequence IFVFQASHPLSWCRILFIGCI. At 331–355 the chain is on the cytoplasmic side; that stretch reads TAPTVRQYYAYLTDTQCKRVGTQCW. A helical membrane pass occupies residues 356–376; it reads VFGVIGFLEAIVCIKFGQDLF. Residues 377–380 lie on the Lumenal side of the membrane; that stretch reads SKTQ. The helical transmembrane segment at 381-401 threads the bilayer; that stretch reads ILYVVFWLLCVAFTTFLCLYG. Over 402-471 the chain is Cytoplasmic; it reads MVWYAEHYGH…SKVTNGVGKK (70 aa). S417, S440, and S452 each carry phosphoserine. Residues 426 to 471 are disordered; the sequence is ISWHHGKGSKGSEDSPPKHSSNNESHSSRRRNRHSKSKVTNGVGKK. A compositionally biased stretch (basic residues) spans 453-462; it reads SRRRNRHSKS.

This sequence belongs to the phosphatidyl serine synthase family.

The protein resides in the endoplasmic reticulum membrane. It carries out the reaction a 1,2-diacyl-sn-glycero-3-phosphoethanolamine + L-serine = a 1,2-diacyl-sn-glycero-3-phospho-L-serine + ethanolamine. The enzyme catalyses a 1,2-diacyl-sn-glycero-3-phosphocholine + L-serine = a 1,2-diacyl-sn-glycero-3-phospho-L-serine + choline. The protein operates within phospholipid metabolism; phosphatidylserine biosynthesis. Its activity is regulated as follows. Inhibited by exogenous phosphatidylserine. Its function is as follows. Catalyzes a base-exchange reaction in which the polar head group of phosphatidylethanolamine (PE) or phosphatidylcholine (PC) is replaced by L-serine. Catalyzes mainly the conversion of phosphatidylcholine. Also converts, in vitro and to a lesser extent, phosphatidylethanolamine. This chain is Phosphatidylserine synthase 1 (PTDSS1), found in Cricetulus griseus (Chinese hamster).